Consider the following 119-residue polypeptide: Large ribosomal subunit protein uL18 (119 aa).

Belongs to the universal ribosomal protein uL18 family. Part of the 50S ribosomal subunit; part of the 5S rRNA/L5/L18/L25 subcomplex. Contacts the 5S and 23S rRNAs.

Functionally, this is one of the proteins that bind and probably mediate the attachment of the 5S RNA into the large ribosomal subunit, where it forms part of the central protuberance. This Roseobacter denitrificans (strain ATCC 33942 / OCh 114) (Erythrobacter sp. (strain OCh 114)) protein is Large ribosomal subunit protein uL18.